The following is a 200-amino-acid chain: 3-isopropylmalate dehydratase small subunit (200 aa).

Belongs to the LeuD family. LeuD type 1 subfamily. Heterodimer of LeuC and LeuD.

It carries out the reaction (2R,3S)-3-isopropylmalate = (2S)-2-isopropylmalate. The protein operates within amino-acid biosynthesis; L-leucine biosynthesis; L-leucine from 3-methyl-2-oxobutanoate: step 2/4. In terms of biological role, catalyzes the isomerization between 2-isopropylmalate and 3-isopropylmalate, via the formation of 2-isopropylmaleate. This Arthrobacter sp. (strain FB24) protein is 3-isopropylmalate dehydratase small subunit.